The following is a 471-amino-acid chain: Collagen alpha-3(IV) chain (471 aa).

The tract at residues G1–P238 is triple-helical region. Residues G1 to G241 are disordered. Positions M52 to S61 are enriched in pro residues. Positions R106–D108 match the Cell attachment site motif. Positions P127–P141 are enriched in pro residues. The span at S165–E174 shows a compositional bias: low complexity. A compositionally biased stretch (pro residues) spans P175–C187. Residues P232 and P238 each carry the hydroxyproline modification. One can recognise a Collagen IV NC1 domain in the interval G246–R470. 6 disulfides stabilise this stretch: C261-C352, C294-C349, C306-C312, C371-C466, C405-C463, and C417-C423. An S-Lysyl-methionine sulfilimine (Met-Lys) (interchain with K-452) cross-link involves residue M334. K452 is covalently cross-linked (S-Lysyl-methionine sulfilimine (Lys-Met) (interchain with M-334)).

This sequence belongs to the type IV collagen family. In terms of assembly, there are six type IV collagen isoforms, alpha 1(IV)-alpha 6(IV), each of which can form a triple helix structure with 2 other chains to generate type IV collagen network. The alpha 3(IV) chain forms a triple helical protomer with alpha 4(IV) and alpha 5(IV); this triple helical structure dimerizes through NC1-NC1 domain interactions such that the alpha 3(IV), alpha 4(IV) and alpha 5(IV) chains of one protomer connect with the alpha 5(IV), alpha 4(IV) and alpha 3(IV) chains of the opposite promoter, respectively. Interacts with ITGB3. Associates with LAMB2 at the neuromuscular junction and in GBM. Prolines at the third position of the tripeptide repeating unit (G-X-Y) are hydroxylated in some or all of the chains. In terms of processing, type IV collagens contain numerous cysteine residues which are involved in inter- and intramolecular disulfide bonding. 12 of these, located in the NC1 domain, are conserved in all known type IV collagens. Post-translationally, the trimeric structure of the NC1 domains is stabilized by covalent bonds between Lys and Met residues. Phosphorylated. Thought to be phosphorylated by CERT, but CERT does not have kinase activity.

Its subcellular location is the secreted. The protein resides in the extracellular space. The protein localises to the extracellular matrix. It is found in the basement membrane. Type IV collagen is the major structural component of glomerular basement membranes (GBM), forming a 'chicken-wire' meshwork together with laminins, proteoglycans and entactin/nidogen. This is Collagen alpha-3(IV) chain (COL4A3) from Bos taurus (Bovine).